Here is a 326-residue protein sequence, read N- to C-terminus: Acetyl-coenzyme A carboxylase carboxyl transferase subunit beta (326 aa).

In terms of domain architecture, CoA carboxyltransferase N-terminal spans 29-298 (LWIKCEACGT…TLISDESLET (270 aa)). Zn(2+) contacts are provided by cysteine 33, cysteine 36, cysteine 52, and cysteine 55. The C4-type zinc-finger motif lies at 33–55 (CEACGTLTYTKDLQANQMVCPEC). Residues 302 to 326 (CHLPFQAESHNLSTTDNKIQPTPQG) form a disordered region. Polar residues predominate over residues 309–326 (ESHNLSTTDNKIQPTPQG).

This sequence belongs to the AccD/PCCB family. As to quaternary structure, acetyl-CoA carboxylase is a heterohexamer composed of biotin carboxyl carrier protein (AccB), biotin carboxylase (AccC) and two subunits each of ACCase subunit alpha (AccA) and ACCase subunit beta (AccD). Zn(2+) serves as cofactor.

Its subcellular location is the cytoplasm. The catalysed reaction is N(6)-carboxybiotinyl-L-lysyl-[protein] + acetyl-CoA = N(6)-biotinyl-L-lysyl-[protein] + malonyl-CoA. The protein operates within lipid metabolism; malonyl-CoA biosynthesis; malonyl-CoA from acetyl-CoA: step 1/1. Component of the acetyl coenzyme A carboxylase (ACC) complex. Biotin carboxylase (BC) catalyzes the carboxylation of biotin on its carrier protein (BCCP) and then the CO(2) group is transferred by the transcarboxylase to acetyl-CoA to form malonyl-CoA. The chain is Acetyl-coenzyme A carboxylase carboxyl transferase subunit beta from Trichodesmium erythraeum (strain IMS101).